The sequence spans 362 residues: 3-dehydroquinate synthase (362 aa).

Residues 71–76 (DGEQYK), 105–109 (GVIGD), 129–130 (TT), K142, K151, and 169–172 (CLQT) each bind NAD(+). 3 residues coordinate Zn(2+): E184, H247, and H264.

The protein belongs to the sugar phosphate cyclases superfamily. Dehydroquinate synthase family. The cofactor is Co(2+). Requires Zn(2+) as cofactor. NAD(+) is required as a cofactor.

Its subcellular location is the cytoplasm. It carries out the reaction 7-phospho-2-dehydro-3-deoxy-D-arabino-heptonate = 3-dehydroquinate + phosphate. It functions in the pathway metabolic intermediate biosynthesis; chorismate biosynthesis; chorismate from D-erythrose 4-phosphate and phosphoenolpyruvate: step 2/7. Its function is as follows. Catalyzes the conversion of 3-deoxy-D-arabino-heptulosonate 7-phosphate (DAHP) to dehydroquinate (DHQ). The chain is 3-dehydroquinate synthase from Cronobacter sakazakii (strain ATCC BAA-894) (Enterobacter sakazakii).